The primary structure comprises 206 residues: Large ribosomal subunit protein uL4 (206 aa).

The disordered stretch occupies residues 49–79 (KVKTRSEISRTTKKMYKQKGTGNARHGAASA).

It belongs to the universal ribosomal protein uL4 family. Part of the 50S ribosomal subunit.

Functionally, one of the primary rRNA binding proteins, this protein initially binds near the 5'-end of the 23S rRNA. It is important during the early stages of 50S assembly. It makes multiple contacts with different domains of the 23S rRNA in the assembled 50S subunit and ribosome. Forms part of the polypeptide exit tunnel. The protein is Large ribosomal subunit protein uL4 of Methylobacterium sp. (strain 4-46).